A 533-amino-acid chain; its full sequence is Peptide chain release factor 3 (533 aa).

Positions 9-284 (ARRRTFAIIS…ALCQLSPPPL (276 aa)) constitute a tr-type G domain. GTP-binding positions include 18 to 25 (SHPDAGKT), 95 to 99 (DTPGH), and 149 to 152 (NKLD).

This sequence belongs to the TRAFAC class translation factor GTPase superfamily. Classic translation factor GTPase family. PrfC subfamily.

The protein resides in the cytoplasm. Increases the formation of ribosomal termination complexes and stimulates activities of RF-1 and RF-2. It binds guanine nucleotides and has strong preference for UGA stop codons. It may interact directly with the ribosome. The stimulation of RF-1 and RF-2 is significantly reduced by GTP and GDP, but not by GMP. The chain is Peptide chain release factor 3 from Cupriavidus pinatubonensis (strain JMP 134 / LMG 1197) (Cupriavidus necator (strain JMP 134)).